A 165-amino-acid polypeptide reads, in one-letter code: MRTGVYPGTFDPITLGHMDIIRRGAKLVDKLVIGVTTNASKSPMFTVEERLAMVRRETADLPGVEVVAFDSLLMDFAESMGAAIIVRGLRAVADFEYEYQMAGMNQQLNNRVETVFLMADVALQPIASRLVKEIALYGGAIDRFVPKRVVQEVVARVEKIGKKGS.

Substrate is bound at residue threonine 9. Residues 9 to 10 (TF) and histidine 17 each bind ATP. Lysine 41, leucine 73, and arginine 87 together coordinate substrate. ATP contacts are provided by residues 88 to 90 (GLR), glutamate 98, and 123 to 129 (LQPIASR).

Belongs to the bacterial CoaD family. Homohexamer. Mg(2+) is required as a cofactor.

It is found in the cytoplasm. The enzyme catalyses (R)-4'-phosphopantetheine + ATP + H(+) = 3'-dephospho-CoA + diphosphate. It participates in cofactor biosynthesis; coenzyme A biosynthesis; CoA from (R)-pantothenate: step 4/5. Functionally, reversibly transfers an adenylyl group from ATP to 4'-phosphopantetheine, yielding dephospho-CoA (dPCoA) and pyrophosphate. The polypeptide is Phosphopantetheine adenylyltransferase (Rhizorhabdus wittichii (strain DSM 6014 / CCUG 31198 / JCM 15750 / NBRC 105917 / EY 4224 / RW1) (Sphingomonas wittichii)).